A 335-amino-acid polypeptide reads, in one-letter code: UPF0324 membrane protein LMOf2365_2179 (335 aa).

8 helical membrane-spanning segments follow: residues 10 to 28 (TFWY…SYFL), 33 to 55 (FLMI…ALFP), 91 to 113 (AGWR…VYFL), 123 to 142 (LAIL…VVAI), 155 to 177 (VAAT…IYPI), 251 to 270 (VPWF…FGII), 277 to 299 (FLVI…NVHL), and 309 to 331 (PFAA…VLLF).

It belongs to the UPF0324 family.

It localises to the cell membrane. This is UPF0324 membrane protein LMOf2365_2179 from Listeria monocytogenes serotype 4b (strain F2365).